We begin with the raw amino-acid sequence, 294 residues long: 4-hydroxy-tetrahydrodipicolinate synthase (294 aa).

Threonine 47 is a binding site for pyruvate. Catalysis depends on tyrosine 135, which acts as the Proton donor/acceptor. The active-site Schiff-base intermediate with substrate is lysine 163. Pyruvate is bound at residue isoleucine 205.

This sequence belongs to the DapA family. Homotetramer; dimer of dimers.

Its subcellular location is the cytoplasm. It carries out the reaction L-aspartate 4-semialdehyde + pyruvate = (2S,4S)-4-hydroxy-2,3,4,5-tetrahydrodipicolinate + H2O + H(+). The protein operates within amino-acid biosynthesis; L-lysine biosynthesis via DAP pathway; (S)-tetrahydrodipicolinate from L-aspartate: step 3/4. Functionally, catalyzes the condensation of (S)-aspartate-beta-semialdehyde [(S)-ASA] and pyruvate to 4-hydroxy-tetrahydrodipicolinate (HTPA). In Rickettsia typhi (strain ATCC VR-144 / Wilmington), this protein is 4-hydroxy-tetrahydrodipicolinate synthase.